The sequence spans 749 residues: Tryptophan 2-monooxygenase (749 aa).

S232, E252, K260, and R280 together coordinate FMN. R280 provides a ligand contact to substrate.

Belongs to the tryptophan 2-monooxygenase family. Requires FMN as cofactor.

The enzyme catalyses L-tryptophan + O2 = indole-3-acetamide + CO2 + H2O. It participates in plant hormone metabolism; auxin biosynthesis. This chain is Tryptophan 2-monooxygenase (aux1), found in Rhizobium rhizogenes (Agrobacterium rhizogenes).